The following is a 191-amino-acid chain: Large ribosomal subunit protein uL5 (191 aa).

The protein belongs to the universal ribosomal protein uL5 family. As to quaternary structure, part of the 50S ribosomal subunit; part of the 5S rRNA/L5/L18/L25 subcomplex. Contacts the 5S rRNA and the P site tRNA. Forms a bridge to the 30S subunit in the 70S ribosome.

In terms of biological role, this is one of the proteins that bind and probably mediate the attachment of the 5S RNA into the large ribosomal subunit, where it forms part of the central protuberance. In the 70S ribosome it contacts protein S13 of the 30S subunit (bridge B1b), connecting the 2 subunits; this bridge is implicated in subunit movement. Contacts the P site tRNA; the 5S rRNA and some of its associated proteins might help stabilize positioning of ribosome-bound tRNAs. This Salinibacter ruber (strain DSM 13855 / M31) protein is Large ribosomal subunit protein uL5.